Here is a 425-residue protein sequence, read N- to C-terminus: tRNA(Ile)-lysidine synthase (425 aa).

27–32 (SGGLDS) is a binding site for ATP.

The protein belongs to the tRNA(Ile)-lysidine synthase family.

It localises to the cytoplasm. It catalyses the reaction cytidine(34) in tRNA(Ile2) + L-lysine + ATP = lysidine(34) in tRNA(Ile2) + AMP + diphosphate + H(+). Ligates lysine onto the cytidine present at position 34 of the AUA codon-specific tRNA(Ile) that contains the anticodon CAU, in an ATP-dependent manner. Cytidine is converted to lysidine, thus changing the amino acid specificity of the tRNA from methionine to isoleucine. This Streptococcus gordonii (strain Challis / ATCC 35105 / BCRC 15272 / CH1 / DL1 / V288) protein is tRNA(Ile)-lysidine synthase.